The chain runs to 195 residues: Probable GTP-binding protein EngB (195 aa).

In terms of domain architecture, EngB-type G spans 24–195; it reads ELPEIALAGR…EAWDAILEKL (172 aa). Residues 32-39, 59-63, 77-80, 144-147, and 176-178 each bind GTP; these read GRSNVGKS, GKTQL, DVPG, TKAD, and FSS. Mg(2+) contacts are provided by Ser39 and Thr61.

The protein belongs to the TRAFAC class TrmE-Era-EngA-EngB-Septin-like GTPase superfamily. EngB GTPase family. It depends on Mg(2+) as a cofactor.

Necessary for normal cell division and for the maintenance of normal septation. This is Probable GTP-binding protein EngB from Streptococcus pneumoniae (strain JJA).